The following is a 676-amino-acid chain: Vitamin K-dependent protein S (676 aa).

The N-terminal stretch at 1–24 is a signal peptide; it reads MRVLGGRCGALLACLLLVLPVSEA. Residues 25–41 constitute a propeptide that is removed on maturation; the sequence is NFLSKQQASQVLVRKRR. The Gla domain maps to 42–87; that stretch reads ANSLLEETKQGNLERECIEELCNKEEAREVFENDPETDYFYPKYLV. A 4-carboxyglutamate mark is found at glutamate 47, glutamate 48, glutamate 55, glutamate 57, glutamate 60, glutamate 61, glutamate 66, glutamate 67, glutamate 70, glutamate 73, and glutamate 77. Cysteine 58 and cysteine 63 are joined by a disulfide. Residues 88 to 116 are thrombin-sensitive; it reads CLRSFQTGLFTAARQSTNAYPDLRSCVNA. The EGF-like 1 domain maps to 117-155; sequence IPDQCSPLPCNEDGYMSCKDGKASFTCTCKPGWQGEKCE. 13 disulfides stabilise this stretch: cysteine 121-cysteine 134, cysteine 126-cysteine 143, cysteine 145-cysteine 154, cysteine 161-cysteine 175, cysteine 171-cysteine 184, cysteine 186-cysteine 199, cysteine 205-cysteine 217, cysteine 212-cysteine 226, cysteine 228-cysteine 241, cysteine 247-cysteine 256, cysteine 252-cysteine 265, cysteine 267-cysteine 282, and cysteine 449-cysteine 475. (3R)-3-hydroxyaspartate is present on aspartate 136. The EGF-like 2; calcium-binding domain maps to 157-200; that stretch reads DINECKDPSNINGGCSQICDNTPGSYHCSCKNGFVMLSNKKDCK. The region spanning 201–242 is the EGF-like 3; calcium-binding domain; sequence DVDECSLKPSICGTAVCKNIPGDFECECPEGYRYNLKSKSCE. Residues 243–283 form the EGF-like 4; calcium-binding domain; the sequence is DIDECSENMCAQLCVNYPGGYTCYCDGKKGFKLAQDQKSCE. 2 Laminin G-like domains span residues 299 to 475 and 484 to 666; these read LLYL…NKHC and YYPG…AHSC. 3 N-linked (GlcNAc...) asparagine glycosylation sites follow: asparagine 499, asparagine 509, and asparagine 530. Cysteine 639 and cysteine 666 form a disulfide bridge.

In terms of processing, the iron and 2-oxoglutarate dependent 3-hydroxylation of aspartate and asparagine is (R) stereospecific within EGF domains. As to expression, plasma.

Its subcellular location is the secreted. Its function is as follows. Anticoagulant plasma protein; it is a cofactor to activated protein C in the degradation of coagulation factors Va and VIIIa. It helps to prevent coagulation and stimulating fibrinolysis. The protein is Vitamin K-dependent protein S (PROS1) of Homo sapiens (Human).